The sequence spans 212 residues: MDRETLAARIDHTVLGPTTTRADVLSVVDDAEAHGMNVCIPPCYVADARDHASADRTIATVIGFPHGTQATSVKVAAAEHAHADGADELDLVIPIGRLKGGDHEAVTAEIAAVNDATPLPVKVIIETPVLTDAEKHAACEAAADADAAMVKTATGFTDGGATVPDVSLMSEYLPVKASGGVGTYADAAAMFDAGAVRIGASSGVDIVASFAE.

Catalysis depends on Asp-90, which acts as the Proton donor/acceptor. The Schiff-base intermediate with acetaldehyde role is filled by Lys-151. The active-site Proton donor/acceptor is Lys-176.

It belongs to the DeoC/FbaB aldolase family. DeoC type 1 subfamily.

The protein resides in the cytoplasm. It catalyses the reaction 2-deoxy-D-ribose 5-phosphate = D-glyceraldehyde 3-phosphate + acetaldehyde. It functions in the pathway carbohydrate degradation; 2-deoxy-D-ribose 1-phosphate degradation; D-glyceraldehyde 3-phosphate and acetaldehyde from 2-deoxy-alpha-D-ribose 1-phosphate: step 2/2. Its function is as follows. Catalyzes a reversible aldol reaction between acetaldehyde and D-glyceraldehyde 3-phosphate to generate 2-deoxy-D-ribose 5-phosphate. This is Deoxyribose-phosphate aldolase from Halobacterium salinarum (strain ATCC 29341 / DSM 671 / R1).